The chain runs to 185 residues: Elongation factor P (185 aa).

It belongs to the elongation factor P family.

Its subcellular location is the cytoplasm. Its pathway is protein biosynthesis; polypeptide chain elongation. Involved in peptide bond synthesis. Stimulates efficient translation and peptide-bond synthesis on native or reconstituted 70S ribosomes in vitro. Probably functions indirectly by altering the affinity of the ribosome for aminoacyl-tRNA, thus increasing their reactivity as acceptors for peptidyl transferase. The protein is Elongation factor P of Halalkalibacterium halodurans (strain ATCC BAA-125 / DSM 18197 / FERM 7344 / JCM 9153 / C-125) (Bacillus halodurans).